A 447-amino-acid chain; its full sequence is tRNA-2-methylthio-N(6)-dimethylallyladenosine synthase (447 aa).

Residues 10 to 128 (KLFCISTYGC…FPEYLHRVLQ (119 aa)) form the MTTase N-terminal domain. Cysteine 19, cysteine 55, cysteine 89, cysteine 165, cysteine 169, and cysteine 172 together coordinate [4Fe-4S] cluster. The region spanning 151-382 (RKSDVKAFVT…EAINKKVVIK (232 aa)) is the Radical SAM core domain. Residues 384–447 (KEYEGKVVEV…PFSLIGEIVE (64 aa)) enclose the TRAM domain.

Belongs to the methylthiotransferase family. MiaB subfamily. Monomer. Requires [4Fe-4S] cluster as cofactor.

It localises to the cytoplasm. It carries out the reaction N(6)-dimethylallyladenosine(37) in tRNA + (sulfur carrier)-SH + AH2 + 2 S-adenosyl-L-methionine = 2-methylsulfanyl-N(6)-dimethylallyladenosine(37) in tRNA + (sulfur carrier)-H + 5'-deoxyadenosine + L-methionine + A + S-adenosyl-L-homocysteine + 2 H(+). Catalyzes the methylthiolation of N6-(dimethylallyl)adenosine (i(6)A), leading to the formation of 2-methylthio-N6-(dimethylallyl)adenosine (ms(2)i(6)A) at position 37 in tRNAs that read codons beginning with uridine. This is tRNA-2-methylthio-N(6)-dimethylallyladenosine synthase from Clostridium perfringens (strain SM101 / Type A).